The chain runs to 424 residues: Chloroquine resistance transporter (424 aa).

The Cytoplasmic segment spans residues 1–49 (MKFASKKNNQKNSSKNDERYRELDNLVQEGNGSRLGGGSCLGKCAHVFK). Residues 50-58 (LIFKEIKDN) lie within the membrane without spanning it. The helical transmembrane segment at 59-83 (IFIYILSIIYLSVSVMNTIFAKRTL) threads the bilayer. Topologically, residues 84–89 (NKIGNY) are vacuolar. The helical transmembrane segment at 90 to 111 (SFVTSETHNFICMIMFFIVYSL) threads the bilayer. Over 112-126 (FGNKKGNSKERHRSF) the chain is Cytoplasmic. A helical membrane pass occupies residues 127-147 (NLQFFAISMLDACSVILAFIG). Residues 148 to 152 (LTRTT) are Vacuolar-facing. The helical transmembrane segment at 153-173 (GNIQSFVLQLSIPINMFFCFL) threads the bilayer. Residues 174–180 (ILRYRYH) are Cytoplasmic-facing. The helical transmembrane segment at 181–202 (LYNYLGAVIIVVTIALVEMKLS) threads the bilayer. Over 203–210 (FETQEENS) the chain is Vacuolar. A helical membrane pass occupies residues 211–236 (IIFNLVLISSLIPVCFSNMTREIVFK). Residues 237–241 (KYKID) lie on the Cytoplasmic side of the membrane. The helical transmembrane segment at 242–263 (ILRLNAMVSFFQLFTSCLILPV) threads the bilayer. Over 264-279 (YTLPFLKQLHLPYNEI) the chain is Vacuolar. An intramembrane segment occupies 280–292 (WTNIKNGFACLFL). Cystine bridges form between Cys289–Cys312 and Cys301–Cys309. The Vacuolar segment spans residues 293-314 (GRNTVVENCGLGMAKLCDDCDG). The chain crosses the membrane as a helical span at residues 315–339 (AWKTFALFSFFDICDNLITSYIIDK). Topologically, residues 340-343 (FSTM) are cytoplasmic. The helical transmembrane segment at 344–361 (TYTIVSCIQGPALAIAYY) threads the bilayer. Residues 362–374 (FKFLAGDVVREPR) are Vacuolar-facing. Residues 375–397 (LLDFVTLFGYLFGSIIYRVGNII) form a helical membrane-spanning segment. Over 398–424 (LERKKMRNEENEDSEGELTNVDSIITQ) the chain is Cytoplasmic.

It belongs to the CRT-like transporter family. As to quaternary structure, monomer.

The protein resides in the membrane. It is found in the vacuole membrane. The enzyme catalyses L-arginine(in) = L-arginine(out). It carries out the reaction L-lysine(in) = L-lysine(out). The catalysed reaction is L-histidine(out) = L-histidine(in). It catalyses the reaction Fe(3+)(in) = Fe(3+)(out). The enzyme catalyses Fe(2+)(in) = Fe(2+)(out). Its function is as follows. Nutrient transporter. Substrate transport is pH-dependent. Can transport arginine, lysine, histidine and peptides. Involved in maintaining the osmotic homeostasis of the digestive vacuole. Required for the normal asexual intraerythrocytic proliferation of parasites. Can transport Fe(2+) and Fe(3+). The chain is Chloroquine resistance transporter from Plasmodium falciparum (isolate 7G8).